Reading from the N-terminus, the 246-residue chain is Complement C1q subcomponent subunit C (246 aa).

The signal sequence occupies residues 1–29; the sequence is MVVGPSCQPPCGLCLLLLFLLALPLRSQA. One can recognise a Collagen-like domain in the interval 32-113; it reads GCYGIPGMPG…GPPGEPGVEG (82 aa). 5 positions are modified to 4-hydroxyproline: Pro-37, Pro-40, Pro-43, Pro-46, and Pro-64. The tract at residues 44–116 is disordered; the sequence is GAPGKDGHDG…GEPGVEGRYK (73 aa). Position 76 is a 5-hydroxylysine (Lys-76). Lys-76 is a glycosylation site (O-linked (Gal...) hydroxylysine). A 4-hydroxyproline mark is found at Pro-82, Pro-97, Pro-100, and Pro-106. Positions 99 to 108 are enriched in pro residues; the sequence is DPGPRGPPGE. The 131-residue stretch at 116–246 folds into the C1q domain; the sequence is KQKHQSVFTV…VFSGFLLFPD (131 aa). A disulfide bridge connects residues Cys-180 and Cys-194.

Core component of the complement C1 complex, a calcium-dependent complex composed of 1 molecule of the C1Q subcomplex, 2 molecules of C1R and 2 molecules of C1S. The C1Q subcomplex is composed 18 subunits: 3 chains of C1QA, C1QB, and C1QC trimerize to form 6 collagen-like triple helices connected to six globular ligand-recognition modules (C1q domain). O-linked glycans consist of Glc-Gal disaccharides bound to the oxygen atom of post-translationally added hydroxyl groups.

It is found in the secreted. It localises to the cell surface. With respect to regulation, the C1Q subcomplex is inhibited by sulfated molecules, such as triterpenoid sulfates, heparan sulfate, or chondroitin sulfates. In terms of biological role, core component of the complement C1 complex, a multiprotein complex that initiates the classical pathway of the complement system, a cascade of proteins that leads to phagocytosis and breakdown of pathogens and signaling that strengthens the adaptive immune system. The classical complement pathway is initiated by the C1Q subcomplex of the C1 complex, which specifically binds IgG or IgM immunoglobulins complexed with antigens, forming antigen-antibody complexes on the surface of pathogens: C1QA, together with C1QB and C1QC, specifically recognizes and binds the Fc regions of IgG or IgM via its C1q domain. Immunoglobulin-binding activates the proenzyme C1R, which cleaves C1S, initiating the proteolytic cascade of the complement system. The C1Q subcomplex is activated by a hexamer of IgG complexed with antigens, while it is activated by a pentameric IgM. The C1Q subcomplex also recognizes and binds phosphatidylserine exposed on the surface of cells undergoing programmed cell death, possibly promoting activation of the complement system. This chain is Complement C1q subcomponent subunit C, found in Mus musculus (Mouse).